The chain runs to 99 residues: Bacterial microcompartment shell vertex protein EutN (99 aa).

Positions 5 to 87 (MKLAVVTGQI…VDLCVIGIVD (83 aa)) constitute a BMV domain.

Belongs to the CcmL/EutN family. Homopentamer with a small central pore.

It is found in the bacterial microcompartment. It participates in amine and polyamine degradation; ethanolamine degradation. In terms of biological role, probably forms vertices in the bacterial microcompartment (BMC) shell dedicated to ethanolamine degradation. Expression of eutK, eutL, eutM, eutN, eutS (eutSMNLK) in E.coli leads to formation of a single BMC. Coexpression of eutQ with eutSMNLK permits E.coli to make cells with more than one mobile BMC, as is usual in vivo. It may be involved in transporting positively charged molecules into and out of the BMC. The ethanolamine (EA) catabolic bacterial microcompartment (BMC) probably concentrates low levels of ethanolamine catabolic enzymes, concentrates volatile reaction intermediates, keeps the level of toxic acetaldehyde low, generates enough acetyl-CoA to support cell growth, and maintains a pool of free coenzyme A (CoA) and NAD. Its function is as follows. Expression of the eut operon allows this bacteria to use ethanolamine (EA) as a carbon, nitrogen and energy source. It relies on cobalamin (vitamin B12) both as a cofactor for the ethanolamine ammonia-lyase (EAL) activity and to induce the operon. EA enhances bacterial survival in macrophages in a concentration-dependent manner, suggesting it is an important nutrient during infection. This is Bacterial microcompartment shell vertex protein EutN from Salmonella typhimurium (strain LT2 / SGSC1412 / ATCC 700720).